Consider the following 245-residue polypeptide: 1-(5-phosphoribosyl)-5-[(5-phosphoribosylamino)methylideneamino] imidazole-4-carboxamide isomerase (245 aa).

Asp7 acts as the Proton acceptor in catalysis. The Proton donor role is filled by Asp129.

The protein belongs to the HisA/HisF family.

It is found in the cytoplasm. It catalyses the reaction 1-(5-phospho-beta-D-ribosyl)-5-[(5-phospho-beta-D-ribosylamino)methylideneamino]imidazole-4-carboxamide = 5-[(5-phospho-1-deoxy-D-ribulos-1-ylimino)methylamino]-1-(5-phospho-beta-D-ribosyl)imidazole-4-carboxamide. Its pathway is amino-acid biosynthesis; L-histidine biosynthesis; L-histidine from 5-phospho-alpha-D-ribose 1-diphosphate: step 4/9. The polypeptide is 1-(5-phosphoribosyl)-5-[(5-phosphoribosylamino)methylideneamino] imidazole-4-carboxamide isomerase (Aliivibrio fischeri (strain MJ11) (Vibrio fischeri)).